A 121-amino-acid chain; its full sequence is Small ribosomal subunit protein uS13 (121 aa).

Positions 95–121 (GLPVRGQKTKTNARTRKGKRKTVGAKS) are disordered.

Belongs to the universal ribosomal protein uS13 family. In terms of assembly, part of the 30S ribosomal subunit. Forms a loose heterodimer with protein S19. Forms two bridges to the 50S subunit in the 70S ribosome.

Functionally, located at the top of the head of the 30S subunit, it contacts several helices of the 16S rRNA. In the 70S ribosome it contacts the 23S rRNA (bridge B1a) and protein L5 of the 50S subunit (bridge B1b), connecting the 2 subunits; these bridges are implicated in subunit movement. Contacts the tRNAs in the A and P-sites. The polypeptide is Small ribosomal subunit protein uS13 (Campylobacter jejuni subsp. jejuni serotype O:23/36 (strain 81-176)).